Here is a 311-residue protein sequence, read N- to C-terminus: tRNA-cytidine(32) 2-sulfurtransferase (311 aa).

The PP-loop motif motif lies at 47 to 52; sequence SGGKDS. The [4Fe-4S] cluster site is built by Cys-122, Cys-125, and Cys-213.

This sequence belongs to the TtcA family. In terms of assembly, homodimer. Mg(2+) is required as a cofactor. Requires [4Fe-4S] cluster as cofactor.

It localises to the cytoplasm. It catalyses the reaction cytidine(32) in tRNA + S-sulfanyl-L-cysteinyl-[cysteine desulfurase] + AH2 + ATP = 2-thiocytidine(32) in tRNA + L-cysteinyl-[cysteine desulfurase] + A + AMP + diphosphate + H(+). Its pathway is tRNA modification. Functionally, catalyzes the ATP-dependent 2-thiolation of cytidine in position 32 of tRNA, to form 2-thiocytidine (s(2)C32). The sulfur atoms are provided by the cysteine/cysteine desulfurase (IscS) system. In Escherichia coli (strain K12 / MC4100 / BW2952), this protein is tRNA-cytidine(32) 2-sulfurtransferase.